The chain runs to 329 residues: Transcription factor MYB2 (329 aa).

HTH myb-type domains lie at 17 to 69 and 70 to 124; these read GGDL…LNYL and RPDL…QKHA. 2 consecutive DNA-binding regions (H-T-H motif) follow at residues 45-69 and 97-120; these read WNSLARSAGLKRTGKSCRLRWLNYL and WSKIAQHLPGRTDNEIKNYWRTRV. 2 stretches are compositionally biased toward low complexity: residues 155-166 and 217-235; these read AAAGQQQQQEGG and LSSTTAGSSSLSTDSGAGA. Disordered stretches follow at residues 155–189 and 206–242; these read AAAGQQQQQEGGTDTPPLSWQHGGSDGLYESPELP and GAQSGGTPAPELSSTTAGSSSLSTDSGAGAQPSWPTQ.

As to expression, highly expressed in leaves. Expressed in roots and shoots. Expressed at low levels in flowers.

Its subcellular location is the nucleus. Its function is as follows. Transcription factor involved in abiotic stress responses. Plays a regulatory role in tolerance to salt, cold, and drought stresses. Positively regulates the expression of genes involved in proline synthesis and transport, and genes involved in reactive oxygen species (ROS) scavenging such as peroxidase, superoxide dismutase and catalase during salt stress. Transactivates stress-related genes, including LEA3, RAB16A and DREB2A during salt stress. The chain is Transcription factor MYB2 from Oryza sativa subsp. japonica (Rice).